A 173-amino-acid polypeptide reads, in one-letter code: Translation initiation factor IF-3 (173 aa).

This sequence belongs to the IF-3 family. Monomer.

Its subcellular location is the cytoplasm. In terms of biological role, IF-3 binds to the 30S ribosomal subunit and shifts the equilibrium between 70S ribosomes and their 50S and 30S subunits in favor of the free subunits, thus enhancing the availability of 30S subunits on which protein synthesis initiation begins. In Methylorubrum populi (strain ATCC BAA-705 / NCIMB 13946 / BJ001) (Methylobacterium populi), this protein is Translation initiation factor IF-3.